Here is a 288-residue protein sequence, read N- to C-terminus: Homoserine kinase (288 aa).

79-89 (PPARGLGSSSA) lines the ATP pocket.

It belongs to the GHMP kinase family. Homoserine kinase subfamily.

Its subcellular location is the cytoplasm. It carries out the reaction L-homoserine + ATP = O-phospho-L-homoserine + ADP + H(+). It functions in the pathway amino-acid biosynthesis; L-threonine biosynthesis; L-threonine from L-aspartate: step 4/5. Functionally, catalyzes the ATP-dependent phosphorylation of L-homoserine to L-homoserine phosphate. The polypeptide is Homoserine kinase (Listeria monocytogenes serotype 4b (strain F2365)).